A 454-amino-acid polypeptide reads, in one-letter code: Protein disulfide-isomerase TMX3 (454 aa).

The signal sequence occupies residues methionine 1–cysteine 24. One can recognise a Thioredoxin domain in the interval lysine 25–arginine 128. The Lumenal portion of the chain corresponds to lysine 25–proline 375. Catalysis depends on nucleophile residues cysteine 53 and cysteine 56. A disulfide bridge connects residues cysteine 53 and cysteine 56. Residues asparagine 258 and asparagine 313 are each glycosylated (N-linked (GlcNAc...) asparagine). The helical transmembrane segment at leucine 376 to isoleucine 396 threads the bilayer. Residues tyrosine 397 to aspartate 454 lie on the Cytoplasmic side of the membrane. The disordered stretch occupies residues valine 412–aspartate 454. Over residues glutamate 444–aspartate 454 the composition is skewed to basic and acidic residues. Positions lysine 451 to aspartate 454 match the Di-lysine motif motif.

It belongs to the protein disulfide isomerase family.

The protein resides in the endoplasmic reticulum membrane. It catalyses the reaction Catalyzes the rearrangement of -S-S- bonds in proteins.. Functionally, probable disulfide isomerase, which participates in the folding of proteins containing disulfide bonds. May act as a dithiol oxidase. Acts as a regulator of endoplasmic reticulum-mitochondria contact sites via its ability to regulate redox signals. The sequence is that of Protein disulfide-isomerase TMX3 (TMX3) from Pongo abelii (Sumatran orangutan).